The primary structure comprises 199 residues: Probable NADH dehydrogenase [ubiquinone] iron-sulfur protein 7, mitochondrial (199 aa).

Residues Cys-74, Cys-75, Cys-139, and Cys-169 each contribute to the [4Fe-4S] cluster site.

This sequence belongs to the complex I 20 kDa subunit family. Complex I is composed of 45 different subunits This is a component of the iron-sulfur (IP) fragment of the enzyme. [4Fe-4S] cluster is required as a cofactor.

The protein resides in the mitochondrion. It carries out the reaction a ubiquinone + NADH + 5 H(+)(in) = a ubiquinol + NAD(+) + 4 H(+)(out). Core subunit of the mitochondrial membrane respiratory chain NADH dehydrogenase (Complex I) that is believed to belong to the minimal assembly required for catalysis. Complex I functions in the transfer of electrons from NADH to the respiratory chain. The immediate electron acceptor for the enzyme is believed to be ubiquinone. The sequence is that of Probable NADH dehydrogenase [ubiquinone] iron-sulfur protein 7, mitochondrial (nduf-7) from Caenorhabditis elegans.